The primary structure comprises 2403 residues: MNDDPPCIVGMACRLPGDVRSPSQLWDLVINQKTGQGPTPPIRYNVDGYYHPDGNRSGGINVPGGYFINEDIRQFDNGFFGINNLEATYMDPQQRKLLEVVFECFESTGASMKSMSGSNTGVYVGNFSVDYQPMQTRDADYLHRYTSTGSGATIMSNRISHVFNLHGPSFTLDTACSSSVYALHQALTAIKVGDCESAVVASANLIMSPELHIGAAKSGVLSPTGTCHTFDASADGYGRAEGVNAIYVKRLSAALRDGNQIRAIVRGSAVNANGRTPGIALPSGNLQEAVMRKAYQNAGLDFAETDYVECHGTGTPVGDPIEVDAVGRCFFRPQGQAPLLIGSVKTNIGHSEAASGLSSVLKVVTAFEKGQIPPTHGLVKLNPKLIPILEQRNLKVVTQADQWPRALRRASVNSFGYGGANAHVILESADSYLSQYFPGRLVTQKRRIENSDQVVVLPVSAASSKSLDIRVQDISQAVSKLFDAENLQGLAYTLTNRRDHLRHKSFLLAKYEGSGKLVEAVEDANNSSDREGLPFGFVFTGQGAQYAGMAKELLAHNRQFRNTIHRLDDVLKALPDPYAPDWTLEQTLLDGPSESRINEVTRSQPICTALQVGLVDLLRSWGVSPTAVVGHSSGEIAAAYAAGLLNSTQAILVAYFRGYSVGKLQSQGTMMAAGVSAQTAKSLIEAKDLQENVRVACVNAPESVTLSGASDGIEALRAEFQDQKKFARKLETGGRAYHSHMMKEIGALYQDLLTPLFAVANSEVPAAARMYSSVGHSTDDLRVLEGHTDWAAYWRQNLEQPVQFSGALASLAEKEGSKLHLIEVGPHSALKGPIQQIRTSIGLDKNSLPYAPSLVRKEDADECLKKLAGTLFVHGHVLDWNKINDLPESGHELVPLHDLAPYPWDYSAPLNWAEPRTSVELRNRKYLRHELLGTFALTGNGIDFTWRNLIRPKEMPWFSDHKLETSVVFPAAGYLAVAIEAVSQVTETRGRLDVAFEFRNVNITAALIVPPDSDPAAKDLELHTTMSLRKLSTVNTSADWHDFAVSSWAAGETTIHCAGSIRVVEPLTESVKHVTTTTVDNDQSFEASPTNRWYQKWDDEGLCFGPYFQSLTSLRTDSERTRSEAIASLRLAPEISSKSYIDSYPVHPITIDACFQAAILGGTAGHLPSLRAWMPVFISECRIQPSSLATSPELEAVIHARSEEVGFSSRRIDATLRDPHGVPVVNLRDARMSLYTGKSSAVQSSSDGKNTNPIDKYMQRQPTLRVHWKPDVARLHPGIERQLQEYVAAFVDQQPLDSDLRDDESIAVIAALVDLAGHKHPRMRVLELGGDDVGYKAKQWLGILNKETAFARCQSWQAGVLDGNGEIVVEGDGEDSSPFDVVVIPRNSSSKQIWSQDPESIASLVSDNGIIVARKSNAAVDVLKALKFNVLPIGQSVILALRPPQWTSLQGRNALIVLGRNPSSTVAEFANTLAAYLRDQAGVALASIVPLDRIDTTDISENDVAISLLETEREFLATISPEDMDRLRAITDVVRDLLWVTGANMLGSVPDPNLTLSNGLSRALMLEQPALRYSVLDIGPVSLLSSTPNAIGTCENALRALAINQEKDDSEFIQRDGILHISRFGPDQDVNSLFRRRLEPLGSLERQTLATAGIARLSVGRPGATDSMFFQQLASTAKTVPEAGYVDIEVKAVGLNAKDVYAIAGRVETRNLTTAIDFSGIITAVGEGVEHLSVGDRVVAWAPNHFTTTERVPAGSVHKLLDHEELTIMSTLITVYGTALYAFNHIAHLRAGESVLIHAGSGGLGFAAITLAQKRGAVVYTTAGSKAKREYLVNELGVPDAHIFNSRDASFVEGILEVTNGRGVDVVLNSLTGDLLHASWACLATFGRFIEVGKRDLVEAGKLDMRVFLRSCTFTAFDLSEFFYAQEPHNRAIWDGLMTQVIELYRAGDIQAPPVKVFGVNEITQAYRTFTQQDRIGKIVISLENPQARIPVVPAAYLSVFDPEKVYLLIGCLGGLGRSLSRWMMSRGARHFVFLGRSGADKPSAQQLVARLQSAGAHVDVVRGDVSRAADVTAAVAASLATGRQIGGVVQAAMGLHEALFTRMPNQAWHTGIDPKWQGTWNLHNALQGHDDALDFFLLTSSVSGTVGTATESNYCAANGFLDAFARWRRSQGKPAVAVGLGMISEVGYLHENPEIEALLLRKGIQPLNEDEFLQVLDLALLSEAAHNPDQAHLLTGLEPAGVRQLKARGFDVSNHGVLTEARAALLAASLAAEQEVLDAQNSTSSSGSNSNTPTTAAPWFKALPGTATSTFASEADAESLNAAILRLIKKRFSNLILMPLEQIDERKALPQFGVDSMIASEFRTWFYTVFKVDIPFLDLMSAQKSLEGLAVVVEGKLVEGWK.

A Ketosynthase family 3 (KS3) domain is found at 3–428; it reads DDPPCIVGMA…GANAHVILES (426 aa). Residues C176, H311, and H350 each act as for beta-ketoacyl synthase activity in the active site. The segment at 538-858 is malonyl-CoA:ACP transacylase (MAT) domain; the sequence is VFTGQGAQYA…PYAPSLVRKE (321 aa). S632 (for malonyltransferase activity) is an active-site residue. The tract at residues 929–1068 is N-terminal hotdog fold; the sequence is HELLGTFALT…GSIRVVEPLT (140 aa). Residues 929–1238 are dehydratase (DH) domain; the sequence is HELLGTFALT…DARMSLYTGK (310 aa). Positions 929–1241 constitute a PKS/mFAS DH domain; it reads HELLGTFALT…MSLYTGKSSA (313 aa). Catalysis depends on H961, which acts as the Proton acceptor; for dehydratase activity. The segment at 1084-1241 is C-terminal hotdog fold; it reads SFEASPTNRW…MSLYTGKSSA (158 aa). The active-site Proton donor; for dehydratase activity is the D1152. An enoyl reductase (ER) domain region spans residues 1663-1981; that stretch reads GATDSMFFQQ…QQDRIGKIVI (319 aa). The segment at 2006-2185 is ketoreductase (KR) domain; sequence VYLLIGCLGG…AVAVGLGMIS (180 aa). The segment at 2280 to 2300 is disordered; it reads AQNSTSSSGSNSNTPTTAAPW. The span at 2282–2296 shows a compositional bias: low complexity; the sequence is NSTSSSGSNSNTPTT. The 79-residue stretch at 2320–2398 folds into the Carrier domain; the sequence is SLNAAILRLI…GLAVVVEGKL (79 aa). S2357 carries the post-translational modification O-(pantetheine 4'-phosphoryl)serine.

It depends on pantetheine 4'-phosphate as a cofactor.

Its pathway is secondary metabolite biosynthesis. Functionally, highly reducing polyketide synthase; part of the gene cluster that mediates the biosynthesis of flavoglaucin and congeners (including aspergin, dihydroauroglaucin and auroglaucin), prenylated salicylaldehyde derivatives carrying a saturated or an unsaturated C-7 side chain. FogA releases the carboxylic acid (8E,10E,12E)-3,5,7-trihydroxytetradeca-8,10,12-trienoic acid as its product, as well as derivatives with one and two double bonds. FogA is indeed able to reduce the initial triketide, thus being at least partially responsible for the differently saturated heptyl side chains of flavoglaucin congeners. The oxidoreductases fogB, fogC and fogD modify the nascent polyketide in fogA-bound form and, together, fogA, fogB, fogC and fogD are necessary for the formation of the aromatic core and the cyclized PKS products are released as salicyl alcohols. In particular, fogB is responsible for oxidation of a hydroxyl group or reduction of remaining double bond(s) at the C-7 residue whereas fogD is probably involved in the reductive release of the modified PKS products. The cytochrome P450 monooxygenase fogE is then responsible for the hydroxylation at C-3 of the benzene ring. The fogE products are substrates of the prenyltransferase fogH and the prenylated benzyl alcohols are subsequently oxidized by the fogF to produce the final aryl aldehydes flavoglaucin and congeners. The short-chain dehydrogenase fogG does not seem to be involved in the biosynthesis of the prenylated salicylaldehyde derivatives. The sequence is that of Highly reducing polyketide synthase fogA from Aspergillus ruber (strain CBS 135680).